The following is a 200-amino-acid chain: Prophage tail fiber assembly protein homolog TfaE (200 aa).

The protein belongs to the tfa family.

This Escherichia coli (strain K12) protein is Prophage tail fiber assembly protein homolog TfaE (tfaE).